The chain runs to 415 residues: uncharacterized protein (415 aa).

Disordered regions lie at residues 39 to 77 (FLPP…RPIH), 220 to 247 (AEDK…HPLT), and 346 to 415 (VTLN…NGSK). Composition is skewed to basic and acidic residues over residues 220–238 (AEDK…ESKN), 365–380 (DVNK…DKHM), and 400–415 (SKTE…NGSK).

This is an uncharacterized protein from Rattus norvegicus (Rat).